We begin with the raw amino-acid sequence, 401 residues long: Elongation factor Tu 2 (401 aa).

In terms of domain architecture, tr-type G spans 10–209 (KPHVNVGTIG…AVDEYIPTPV (200 aa)). Positions 19-26 (GHVDHGKT) are G1. 19–26 (GHVDHGKT) is a GTP binding site. Thr26 lines the Mg(2+) pocket. The tract at residues 60–64 (GITIA) is G2. Positions 81–84 (DCPG) are G3. Residues 81-85 (DCPGH) and 136-139 (NKVD) each bind GTP. The tract at residues 136 to 139 (NKVD) is G4. The tract at residues 174–176 (SAL) is G5.

It belongs to the TRAFAC class translation factor GTPase superfamily. Classic translation factor GTPase family. EF-Tu/EF-1A subfamily. Monomer.

Its subcellular location is the cytoplasm. It carries out the reaction GTP + H2O = GDP + phosphate + H(+). In terms of biological role, GTP hydrolase that promotes the GTP-dependent binding of aminoacyl-tRNA to the A-site of ribosomes during protein biosynthesis. The protein is Elongation factor Tu 2 of Roseiflexus castenholzii (strain DSM 13941 / HLO8).